The following is a 1720-amino-acid chain: TOG array regulator of axonemal microtubules protein 1 (1720 aa).

TOG stretches follow at residues 94–312 (EEDT…RRLE) and 352–596 (PQEL…MPSS). HEAT repeat units follow at residues 175 to 212 (AFSL…RSPG), 214 to 247 (VLRT…TEDL), 251 to 289 (LDLT…RLGQ), 345 to 384 (NLKF…KFNP), 390 to 427 (SSLV…RLGE), 431 to 466 (QFLG…MKEV), 467 to 504 (GPQQ…YPSE), and 506 to 543 (FDLP…SMGS). 4 stretches are compositionally biased toward polar residues: residues 794-809 (FGSQ…QNPS), 819-829 (PVSSPRTSPKH), 842-852 (DNSVNFSNSWP), and 868-877 (LVSQKSSDPT). Disordered stretches follow at residues 794–924 (FGSQ…SLLP), 970–998 (HSSL…ESPD), and 1067–1087 (KKIS…NPQQ). Residues 1073–1087 (AEQSPSAGSSSNPQQ) are compositionally biased toward polar residues. The segment at 1256 to 1425 (EIALTEALRL…YIKDSVRNLQ (170 aa)) is TOG 3. HEAT repeat units follow at residues 1294 to 1331 (TKLH…YLKK) and 1335 to 1372 (QELD…NVTP). The tract at residues 1430–1462 (GEIPLDTPSAKGRRSHTGSVGNTRSSSVSRDAF) is disordered. Over residues 1446-1458 (TGSVGNTRSSSVS) the composition is skewed to polar residues. Residues 1484–1720 (SLESAEYLKL…LLDMTILNEL (237 aa)) form a TOG 4 region. 3 HEAT repeats span residues 1485–1522 (LESA…NNQD), 1526–1563 (GNIV…LLRD), and 1567–1605 (PIIN…HVDN).

Belongs to the Crescerin family. As to quaternary structure, interacts with ARMC9, CCDC66, CEP104 and CSPP1.

The protein localises to the cell projection. The protein resides in the cilium. It is found in the cytoplasm. It localises to the cytoskeleton. Its subcellular location is the cilium axoneme. Functionally, involved in ciliogenesis. It is required for appropriate acetylation and polyglutamylation of ciliary microtubules, and regulation of cilium length. Interacts with microtubules and promotes microtubule polymerization via its HEAT repeat domains, especially those in TOG region 2 and 4. This is TOG array regulator of axonemal microtubules protein 1 from Homo sapiens (Human).